A 211-amino-acid chain; its full sequence is SVVGIDLGFLNCYIAVARSGGIETIANEYSDRCTPACISLGSRSQIVTNVRNTIHGFKKIRLPYELQKMPNGSTGVKVRLKVLATTFDPYLGGRVEPPLKSVMDQANLQREDINSIEIVGGATRIPAVKEQVTRFFLKDISTTLNADEAVARNHPAPFSKSIDLPIQSSLYRNAVEEYVYDFRDKFITPEDMNKYGQPIQMKYVEHEERPK.

The residue at position 161 (Ser-161) is a Phosphoserine.

Belongs to the heat shock protein 70 family. As to quaternary structure, homodimer.

It localises to the cytoplasm. It is found in the nucleus. Functionally, possesses chaperone activity in vitro where it inhibits aggregation of citrate synthase. This is Heat shock 70 kDa protein 4L from Mesocricetus auratus (Golden hamster).